The chain runs to 852 residues: Ubiquitin carboxyl-terminal hydrolase 4 (852 aa).

Residues 172 to 296 enclose the Rhodanese domain; sequence ASGTVLLVDV…WSNAHPDFCV (125 aa). The segment at 369–393 is disordered; it reads RSSSSSSNINERPGSVPPQLSNGST. The USP domain occupies 488–849; that stretch reads VGLVNCGNSC…NAYVLFYHRI (362 aa). The active-site Nucleophile is the Cys497. Residue His806 is the Proton acceptor of the active site.

Belongs to the peptidase C19 family.

Its subcellular location is the cytoplasm. The protein localises to the late endosome membrane. The catalysed reaction is Thiol-dependent hydrolysis of ester, thioester, amide, peptide and isopeptide bonds formed by the C-terminal Gly of ubiquitin (a 76-residue protein attached to proteins as an intracellular targeting signal).. RFU1 is an inhibitor of deubiquitination activity. Its function is as follows. Ubiquitin thioesterase that acts at the late endosome/prevacuolar compartment to recover ubiquitin from ubiquitinated membrane proteins en route to the vacuole. Also removes ubiquitin from soluble proteins targeted to proteasomes. Is essential to maintain a normal level of free ubiquitin. Required for promoting coordination of DNA replication and avoids DNA overreplication. This Eremothecium gossypii (strain ATCC 10895 / CBS 109.51 / FGSC 9923 / NRRL Y-1056) (Yeast) protein is Ubiquitin carboxyl-terminal hydrolase 4 (DOA4).